The primary structure comprises 660 residues: Methionine--tRNA ligase 1 (660 aa).

A 'HIGH' region motif is present at residues Y15–H25. The 'KMSKS' region motif lies at K310 to S314. K313 contributes to the ATP binding site. One can recognise a tRNA-binding domain in the interval D560–K660.

Belongs to the class-I aminoacyl-tRNA synthetase family. MetG type 2B subfamily. As to quaternary structure, homodimer.

Its subcellular location is the cytoplasm. The catalysed reaction is tRNA(Met) + L-methionine + ATP = L-methionyl-tRNA(Met) + AMP + diphosphate. In terms of biological role, is required not only for elongation of protein synthesis but also for the initiation of all mRNA translation through initiator tRNA(fMet) aminoacylation. This Bacillus anthracis protein is Methionine--tRNA ligase 1.